We begin with the raw amino-acid sequence, 375 residues long: 23S rRNA (uracil(747)-C(5))-methyltransferase RlmC (375 aa).

Positions 3, 11, 14, and 87 each coordinate [4Fe-4S] cluster. S-adenosyl-L-methionine contacts are provided by Q212, F241, E262, and N307. C334 functions as the Nucleophile in the catalytic mechanism.

It belongs to the class I-like SAM-binding methyltransferase superfamily. RNA M5U methyltransferase family. RlmC subfamily.

The enzyme catalyses uridine(747) in 23S rRNA + S-adenosyl-L-methionine = 5-methyluridine(747) in 23S rRNA + S-adenosyl-L-homocysteine + H(+). In terms of biological role, catalyzes the formation of 5-methyl-uridine at position 747 (m5U747) in 23S rRNA. This is 23S rRNA (uracil(747)-C(5))-methyltransferase RlmC from Escherichia coli O45:K1 (strain S88 / ExPEC).